Here is a 95-residue protein sequence, read N- to C-terminus: Aspartyl/glutamyl-tRNA(Asn/Gln) amidotransferase subunit C (95 aa).

This sequence belongs to the GatC family. Heterotrimer of A, B and C subunits.

The enzyme catalyses L-glutamyl-tRNA(Gln) + L-glutamine + ATP + H2O = L-glutaminyl-tRNA(Gln) + L-glutamate + ADP + phosphate + H(+). The catalysed reaction is L-aspartyl-tRNA(Asn) + L-glutamine + ATP + H2O = L-asparaginyl-tRNA(Asn) + L-glutamate + ADP + phosphate + 2 H(+). Allows the formation of correctly charged Asn-tRNA(Asn) or Gln-tRNA(Gln) through the transamidation of misacylated Asp-tRNA(Asn) or Glu-tRNA(Gln) in organisms which lack either or both of asparaginyl-tRNA or glutaminyl-tRNA synthetases. The reaction takes place in the presence of glutamine and ATP through an activated phospho-Asp-tRNA(Asn) or phospho-Glu-tRNA(Gln). The polypeptide is Aspartyl/glutamyl-tRNA(Asn/Gln) amidotransferase subunit C (Pelobacter propionicus (strain DSM 2379 / NBRC 103807 / OttBd1)).